The chain runs to 337 residues: MSIDIDIIKARAKNEYRLSKVRGEAMISVRIPGGILPAHLLTVARDIAETWGNGQIHLTTRQKLAMPGIRYEDIDNVNAALEPFLREIEIELCDVQVEDTKAGYLAIGGRNIVACQGNRICQKANTDTTGLSRRLEKLVYPSPYHLKTVIVGCPNDCAKASMADLGIIGVAKMRFTADRCIGCGACVKACSHHAVGCLALKNGKAVKEESACIGCGECVLACPTLAWQRKPDQLWQVRLGGRTSKKTPRVGKLFLNWVTEDVIKQVIVNLYEFEKEMLGGKPIYLHMGHLIDKGGYLRFKERVLRGVQLNPEAMVAERIYWAEDESVARMHLKPAGH.

The [4Fe-4S] cluster site is built by Cys-115, Cys-121, Cys-153, Cys-157, Cys-180, Cys-183, Cys-186, Cys-190, Cys-212, Cys-215, Cys-218, and Cys-222. Residue Cys-157 coordinates siroheme. 4Fe-4S ferredoxin-type domains lie at 171-200 (AKMR…CLAL) and 203-232 (GKAV…RKPD).

Belongs to the nitrite and sulfite reductase 4Fe-4S domain family. As to quaternary structure, the anaerobic sulfite reductase seems to consist of three subunits. [4Fe-4S] cluster serves as cofactor. Siroheme is required as a cofactor.

Its subcellular location is the cytoplasm. It catalyses the reaction hydrogen sulfide + 3 NAD(+) + 3 H2O = sulfite + 3 NADH + 4 H(+). Its pathway is sulfur metabolism; sulfite reduction. Functionally, this enzyme catalyzes the hydrogen sulfide production from sulfite. It is strictly anaerobic. It is regulated by electron acceptors rather than by cysteine. This chain is Anaerobic sulfite reductase subunit C (asrC), found in Salmonella typhi.